Reading from the N-terminus, the 262-residue chain is Cytochrome c oxidase subunit 3 (262 aa).

6 helical membrane-spanning segments follow: residues tyrosine 39–tryptophan 59, glycine 83–phenylalanine 103, valine 120–alanine 140, glycine 163–isoleucine 183, alanine 201–leucine 221, and alanine 240–tryptophan 260.

This sequence belongs to the cytochrome c oxidase subunit 3 family. As to quaternary structure, component of the cytochrome c oxidase (complex IV, CIV), a multisubunit enzyme composed of a catalytic core of 3 subunits and several supernumerary subunits. The complex exists as a monomer or a dimer and forms supercomplexes (SCs) in the inner mitochondrial membrane with ubiquinol-cytochrome c oxidoreductase (cytochrome b-c1 complex, complex III, CIII).

The protein resides in the mitochondrion inner membrane. The enzyme catalyses 4 Fe(II)-[cytochrome c] + O2 + 8 H(+)(in) = 4 Fe(III)-[cytochrome c] + 2 H2O + 4 H(+)(out). In terms of biological role, component of the cytochrome c oxidase, the last enzyme in the mitochondrial electron transport chain which drives oxidative phosphorylation. The respiratory chain contains 3 multisubunit complexes succinate dehydrogenase (complex II, CII), ubiquinol-cytochrome c oxidoreductase (cytochrome b-c1 complex, complex III, CIII) and cytochrome c oxidase (complex IV, CIV), that cooperate to transfer electrons derived from NADH and succinate to molecular oxygen, creating an electrochemical gradient over the inner membrane that drives transmembrane transport and the ATP synthase. Cytochrome c oxidase is the component of the respiratory chain that catalyzes the reduction of oxygen to water. Electrons originating from reduced cytochrome c in the intermembrane space (IMS) are transferred via the dinuclear copper A center (CU(A)) of subunit 2 and heme A of subunit 1 to the active site in subunit 1, a binuclear center (BNC) formed by heme A3 and copper B (CU(B)). The BNC reduces molecular oxygen to 2 water molecules using 4 electrons from cytochrome c in the IMS and 4 protons from the mitochondrial matrix. The polypeptide is Cytochrome c oxidase subunit 3 (COIII) (Anopheles quadrimaculatus (Common malaria mosquito)).